Here is a 249-residue protein sequence, read N- to C-terminus: NADH-quinone oxidoreductase subunit C (249 aa).

It belongs to the complex I 30 kDa subunit family. NDH-1 is composed of 14 different subunits. Subunits NuoB, C, D, E, F, and G constitute the peripheral sector of the complex.

Its subcellular location is the cell inner membrane. It catalyses the reaction a quinone + NADH + 5 H(+)(in) = a quinol + NAD(+) + 4 H(+)(out). In terms of biological role, NDH-1 shuttles electrons from NADH, via FMN and iron-sulfur (Fe-S) centers, to quinones in the respiratory chain. The immediate electron acceptor for the enzyme in this species is believed to be ubiquinone. Couples the redox reaction to proton translocation (for every two electrons transferred, four hydrogen ions are translocated across the cytoplasmic membrane), and thus conserves the redox energy in a proton gradient. The protein is NADH-quinone oxidoreductase subunit C of Xylella fastidiosa (strain M12).